The following is a 640-amino-acid chain: MDKKYYQLLKKQFSSKEAVLTEIINLSAICELPKATEHFMSDVHGEYDAFNHVLRNGSGSIKEKLRDCFPQFSSAEISSVATLIYYPQEKLDSECQLQDKKLFEHYCRLNLVYLLKTVKFVGQKYTRSKVRKAFPEKFRYILEELINEVDSTTDKQDYFDSILSQLQNLGELTRLIVALADTIRRLTVDHLHVVGDIYDRGPYPDKIIDRLINMPSVDVQWGNHDIVWMAAFSGSPLAMMNVIRICARYGNLDILEESYGINLRAILEYAERYYEPSEAFRPRLVDGVRLSADEKALLNKLQQTTAILQFKLESQLIERRPDFQLEHRDLLHFIDFSQNKIELAGETYDLIDFQAPTINPEQPASLTEEEEKIIAHLLNNFKTSDKLKRHVGFLQEKGAMYLSYNGNLLIHGCLPLHENGDFKSFTIDKKAYAGRDLLDFFDSEVRKCLAHPEESEDLATDLMWYLWVGECSSLFGKTAMTTFERYYIKDKSTHVEKKNPYYQLREQPKIITKILENFGLDENGHLVNGHTPIKEKNGENPIKADGKLIVIDGGFAKAYQKETGIAGYTLLYNSFGIQLVAHQPFSTVKAAVEKGTDIISLKRLVAEVDERKRVKDTNVGQTLLSEIADLEVLFEHYEDY.

This sequence belongs to the FBPase class 3 family. Mn(2+) is required as a cofactor.

It catalyses the reaction beta-D-fructose 1,6-bisphosphate + H2O = beta-D-fructose 6-phosphate + phosphate. It participates in carbohydrate biosynthesis; gluconeogenesis. The protein is Fructose-1,6-bisphosphatase class 3 of Lactococcus lactis subsp. cremoris (strain MG1363).